Reading from the N-terminus, the 120-residue chain is Late histone H2A.2.2 (120 aa).

Positions 1 to 18 (MSGRGKGAKSKSKAKSRS) are enriched in basic residues. The interval 1–22 (MSGRGKGAKSKSKAKSRSSRAG) is disordered. Ser-2 bears the N-acetylserine mark. Ser-2 is modified (phosphoserine). Gln-104 is modified (N5-methylglutamine). Lys-119 is covalently cross-linked (Glycyl lysine isopeptide (Lys-Gly) (interchain with G-Cter in ubiquitin)).

The protein belongs to the histone H2A family. The nucleosome is a histone octamer containing two molecules each of H2A, H2B, H3 and H4 assembled in one H3-H4 heterotetramer and two H2A-H2B heterodimers. The octamer wraps approximately 147 bp of DNA. In terms of processing, monoubiquitination of Lys-119 gives a specific tag for epigenetic transcriptional repression. Post-translationally, phosphorylation of Ser-2 directly represses transcription.

The protein localises to the nucleus. The protein resides in the chromosome. Core component of nucleosome. Nucleosomes wrap and compact DNA into chromatin, limiting DNA accessibility to the cellular machineries which require DNA as a template. Histones thereby play a central role in transcription regulation, DNA repair, DNA replication and chromosomal stability. DNA accessibility is regulated via a complex set of post-translational modifications of histones, also called histone code, and nucleosome remodeling. This chain is Late histone H2A.2.2, found in Psammechinus miliaris (Green sea urchin).